The sequence spans 37 residues: Cytochrome b6-f complex subunit 5 (37 aa).

The chain crosses the membrane as a helical span at residues 5–25; the sequence is LLSGIVLGLISITSAGLFVTA.

It belongs to the PetG family. In terms of assembly, the 4 large subunits of the cytochrome b6-f complex are cytochrome b6, subunit IV (17 kDa polypeptide, PetD), cytochrome f and the Rieske protein, while the 4 small subunits are PetG, PetL, PetM and PetN. The complex functions as a dimer.

It localises to the plastid. It is found in the chloroplast thylakoid membrane. Component of the cytochrome b6-f complex, which mediates electron transfer between photosystem II (PSII) and photosystem I (PSI), cyclic electron flow around PSI, and state transitions. PetG is required for either the stability or assembly of the cytochrome b6-f complex. The sequence is that of Cytochrome b6-f complex subunit 5 from Psilotum nudum (Whisk fern).